A 638-amino-acid polypeptide reads, in one-letter code: 1-deoxy-D-xylulose-5-phosphate synthase (638 aa).

Residues His-79 and 120–122 (AHS) each bind thiamine diphosphate. Asp-151 lines the Mg(2+) pocket. Thiamine diphosphate is bound by residues 152–153 (GA), Asn-180, Tyr-289, and Glu-371. Mg(2+) is bound at residue Asn-180.

This sequence belongs to the transketolase family. DXPS subfamily. As to quaternary structure, homodimer. The cofactor is Mg(2+). Thiamine diphosphate serves as cofactor.

The enzyme catalyses D-glyceraldehyde 3-phosphate + pyruvate + H(+) = 1-deoxy-D-xylulose 5-phosphate + CO2. The protein operates within metabolic intermediate biosynthesis; 1-deoxy-D-xylulose 5-phosphate biosynthesis; 1-deoxy-D-xylulose 5-phosphate from D-glyceraldehyde 3-phosphate and pyruvate: step 1/1. In terms of biological role, catalyzes the acyloin condensation reaction between C atoms 2 and 3 of pyruvate and glyceraldehyde 3-phosphate to yield 1-deoxy-D-xylulose-5-phosphate (DXP). The protein is 1-deoxy-D-xylulose-5-phosphate synthase of Rhizobium etli (strain CIAT 652).